The following is a 540-amino-acid chain: Protein PALS2 (540 aa).

L27 domains follow at residues 1–48 (MQQV…EDSK) and 49–107 (LEAV…YDSP). A PDZ domain is found at 130 to 209 (ILGIHKRAGE…SVTLKILPSY (80 aa)). Residues 215–284 (PQQVFVKCHF…PSQFLEEKRK (70 aa)) form the SH3 domain. The 188-residue stretch at 338-525 (RKTLVLIGAQ…AFEKLQTAIE (188 aa)) folds into the Guanylate kinase-like domain. Tyr500 carries the phosphotyrosine modification.

This sequence belongs to the MAGUK family. As to quaternary structure, interacts with CADM1. Interacts with the LIN7 proteins. As to expression, abundant in testis, brain, and kidney with lower levels detectable in other tissues.

It localises to the membrane. This is Protein PALS2 from Homo sapiens (Human).